We begin with the raw amino-acid sequence, 146 residues long: Large ribosomal subunit protein bL19 (146 aa).

This sequence belongs to the bacterial ribosomal protein bL19 family.

This protein is located at the 30S-50S ribosomal subunit interface and may play a role in the structure and function of the aminoacyl-tRNA binding site. This is Large ribosomal subunit protein bL19 from Bartonella henselae (strain ATCC 49882 / DSM 28221 / CCUG 30454 / Houston 1) (Rochalimaea henselae).